A 606-amino-acid polypeptide reads, in one-letter code: Proton myo-inositol cotransporter hmit-1.1 (606 aa).

The Cytoplasmic segment spans residues 1-20; the sequence is MVAVAAFSSSGQDKPAHTPK. A helical membrane pass occupies residues 21 to 41; sequence LGLFVYILAAASVIGGFLFGY. Over 42 to 63 the chain is Extracellular; the sequence is DTSVVSAAMLYMPDAPGLKPMD. The helical transmembrane segment at 64–84 threads the bilayer; sequence TVWQEVLVSISPGMAAVGSLM. The Cytoplasmic portion of the chain corresponds to 85–96; sequence SGTSSDYIGRRK. A helical membrane pass occupies residues 97 to 117; it reads VILGASAIFTIGALVCAASVN. Position 118 (Lys118) is a topological domain, extracellular. A helical transmembrane segment spans residues 119 to 139; that stretch reads IMLLVGRVLLGIAIGFASMIV. Residues 140-152 lie on the Cytoplasmic side of the membrane; sequence PVYLGETAPTHVR. The helical transmembrane segment at 153–173 threads the bilayer; the sequence is GMLVAAFALMISFGQVVANIT. Topologically, residues 174–188 are extracellular; the sequence is GGAFSYIDPYNVGWR. A helical membrane pass occupies residues 189 to 209; it reads LMFAFAAVPSIIQFVCFMFLP. Topologically, residues 210–278 are cytoplasmic; it reads ETPRWLYENG…RILKTPHVLK (69 aa). A helical membrane pass occupies residues 279 to 299; sequence ACFIGSMLQAFQQLAGINTIL. The Extracellular segment spans residues 300-317; that stretch reads YYTADIIRSSGISNNHTT. N-linked (GlcNAc...) asparagine glycosylation is present at Asn314. The helical transmembrane segment at 318-338 threads the bilayer; that stretch reads IWISVLLSLCNFIGPFVPMSL. At 339 to 345 the chain is on the cytoplasmic side; the sequence is IEKVGRR. A helical transmembrane segment spans residues 346-366; that stretch reads IIFLFSCGLVVLSLVFIGVAF. Topologically, residues 367–464 are extracellular; that stretch reads LLVNHDSAAT…EKYYCDTKYT (98 aa). N-linked (GlcNAc...) asparagine glycosylation is found at Asn387 and Asn445. The chain crosses the membrane as a helical span at residues 465-485; sequence LLPIIACGVYLLTFSSGFTSL. Topologically, residues 486–501 are cytoplasmic; the sequence is PWVLNSEFYPMWARST. A helical membrane pass occupies residues 502–522; the sequence is CVAISTTSNWVFNLIIALTYL. At 523 to 531 the chain is on the extracellular side; the sequence is SLTQVIGKY. The helical transmembrane segment at 532–552 threads the bilayer; the sequence is GAFWLYAGLTVIAFIFILFLV. The Cytoplasmic segment spans residues 553 to 606; it reads PETKGYSIEEVEMLFMNKKQRREAESRRRETVTEVRSRMNSTVSFGQHNEVHKY.

The protein belongs to the major facilitator superfamily. Sugar transporter (TC 2.A.1.1) family. As to expression, expressed in the intestine.

It localises to the cell membrane. It carries out the reaction myo-inositol(out) + H(+)(out) = myo-inositol(in) + H(+)(in). In terms of biological role, h(+)-myo-inositol cotransporter. Probably by promoting the transport of myo-inositol regulates intracellular osmosis in response to hyperosmotic stress. The sequence is that of Proton myo-inositol cotransporter hmit-1.1 from Caenorhabditis elegans.